The primary structure comprises 342 residues: Aquaporin-7 (342 aa).

The Cytoplasmic segment spans residues 1–36 (MVQTSRHRRSTRGSKMVSWSVMAKIQEILQKKMVRE). Ser20 carries the phosphoserine modification. Residues 37 to 54 (FLAEFMSTYVMMVFGLGS) traverse the membrane as a helical segment. Residues 55-67 (VAHMVLNKKYGSY) are Extracellular-facing. A helical membrane pass occupies residues 68–85 (LGVNLGFGFGVTMGVHVA). Over 86–89 (GHIS) the chain is Cytoplasmic. Positions 90–103 (GAHMNAAVTFANCA) form an intramembrane region, discontinuously helical. The NPA 1 motif lies at 94 to 96 (NAA). The Cytoplasmic segment spans residues 104-111 (LGRVPWRK). A helical transmembrane segment spans residues 112–132 (FPVYVLGQFLGSFLAAATIYT). Residues 133–167 (LFYTAILHFSGGQLMVTGPVATAGIFATYLPDHMT) are Extracellular-facing. Residues 168 to 188 (LWRGFLNEAWLTGMLQLCLFA) traverse the membrane as a helical segment. The Cytoplasmic segment spans residues 189-200 (ITDQENNAALPG). A helical membrane pass occupies residues 201 to 217 (TQALVIGILVVIIGVSL). Residues 218–221 (GMNT) are Extracellular-facing. An intramembrane region (discontinuously helical) is located at residues 222–235 (GYAINPSRDLPPRV). The short motif at 226–228 (NPS) is the NPA 2 element. Over 236-253 (FTFIAGWGKEVFSEGENW) the chain is Extracellular. The chain crosses the membrane as a helical span at residues 254–275 (WWVPVVAPLLGACLGGIIYLVF). At 276 to 342 (IGSTTPREPL…LHESMALGHF (67 aa)) the chain is on the cytoplasmic side.

It belongs to the MIP/aquaporin (TC 1.A.8) family. As to quaternary structure, homotetramer; each monomer provides an independent glycerol/water pore. Two homotetramers on opposing membranes can dimerize, forming a cell-cell junction. Interacts with PLIN1. In terms of processing, phosphorylation by PKA could prevent the interaction with PLIN1.

The protein localises to the cell membrane. Its subcellular location is the cytoplasmic vesicle membrane. It is found in the lipid droplet. It catalyses the reaction glycerol(in) = glycerol(out). The enzyme catalyses H2O(in) = H2O(out). The catalysed reaction is urea(in) = urea(out). With respect to regulation, glycerol transport is regulated by pH, with the porin being permeable to glycerol at pH 7.4 but not at pH 5.5. Water permeability, however, is not influenced by pH. Functionally, aquaglyceroporins form homotetrameric transmembrane channels, with each monomer independently mediating glycerol and water transport across the plasma membrane along their osmotic gradient. Could also be permeable to urea. Mediates the efflux of glycerol, formed upon triglyceride hydrolysis, to avoid its accumulation in adipocytes and to make it available to other tissues. In the kidney, mediates the reabsorption of glycerol, preventing its loss in urine, again participating to energy homeostasis. In pancreatic beta cells, it also mediates the efflux of glycerol, regulating its intracellular levels. This is Aquaporin-7 (AQP7) from Macaca fascicularis (Crab-eating macaque).